The primary structure comprises 116 residues: Large ribosomal subunit protein bL20 (116 aa).

This sequence belongs to the bacterial ribosomal protein bL20 family.

Binds directly to 23S ribosomal RNA and is necessary for the in vitro assembly process of the 50S ribosomal subunit. It is not involved in the protein synthesizing functions of that subunit. In Phocaeicola vulgatus (strain ATCC 8482 / DSM 1447 / JCM 5826 / CCUG 4940 / NBRC 14291 / NCTC 11154) (Bacteroides vulgatus), this protein is Large ribosomal subunit protein bL20.